Here is a 216-residue protein sequence, read N- to C-terminus: MFKIFNSDKNKTFKPKKGFSKGTKRHDLHKHAKATLGSGNLRLAVSLPEREDLNEWLAVNTVDFFNQINLLYGSITEFCTPKTCEVMSAGPKYEYLWADGESVKKPIKVSAPEYVEFLMTWVQGILDDENIFPSRVDVQFPKNFQSIVKNIFKRLFRVYGHIYYSHFTKIVSLGEEAHLNTCFKHFYFFIVEFNLVDKKEMLPLQDLIDNLTKSST.

Positions 79, 84, 161, and 166 each coordinate Zn(2+).

It belongs to the MOB1/phocein family.

This Dictyostelium discoideum (Social amoeba) protein is MOB kinase activator-like 1 homolog B (mobB).